Reading from the N-terminus, the 97-residue chain is YcgL domain-containing protein Avin_32960 (97 aa).

The YcgL domain occupies 3 to 87 (CICSIYKSPR…PEEEYVEHLP (85 aa)).

The chain is YcgL domain-containing protein Avin_32960 from Azotobacter vinelandii (strain DJ / ATCC BAA-1303).